An 800-amino-acid chain; its full sequence is Putative antiporter subunit mnhA2 (800 aa).

20 helical membrane passes run 1–21 (MSLV…LLMS), 33–53 (IALV…PSVA), 78–98 (GLSL…FFYA), 118–138 (LFMF…MYIF), 167–187 (FMIT…LYIM), 207–227 (GLFI…SAQF), 241–261 (TPVS…FLLL), 273–293 (YIYI…ITAL), 300–320 (GILA…VGIG), 331–351 (IASI…NHAI), 387–407 (LVMT…GFLS), 424–444 (FSLI…IFTF), 472–492 (PWLF…IFFV), 527–547 (GFNI…VLAI), 595–615 (IIMT…RIGL), 627–647 (GALE…LIFI), 651–671 (LTMV…FIAM), 676–696 (LALT…VSFS), 712–732 (IIKI…IFIT), and 768–788 (LDTL…YTLL).

It belongs to the CPA3 antiporters (TC 2.A.63) subunit A family. As to quaternary structure, may form a heterooligomeric complex that consists of seven subunits: mnhA2, mnhB2, mnhC2, mnhD2, mnhE2, mnhF2 and mnhG2.

The protein localises to the cell membrane. The polypeptide is Putative antiporter subunit mnhA2 (mnhA2) (Staphylococcus aureus (strain Mu3 / ATCC 700698)).